Here is a 319-residue protein sequence, read N- to C-terminus: Protein HEXIM1 (319 aa).

Residues Met-1–Arg-22 show a composition bias toward basic and acidic residues. Disordered stretches follow at residues Met-1–Arg-111, Leu-157–Asp-223, Asn-262–Glu-286, and Asn-299–Ser-319. Positions Ser-24–Gln-35 are enriched in polar residues. Residues Pro-49–Thr-61 are compositionally biased toward basic and acidic residues. Residues Gly-97 to Arg-111 are compositionally biased toward basic residues. Residues Thr-185–Gly-202 are compositionally biased toward acidic residues. Residues Gly-203–Gly-216 are compositionally biased toward gly residues. Residues Ser-240–Pro-306 are a coiled coil. Residues Pro-306–Ser-319 show a composition bias toward polar residues.

The protein belongs to the HEXIM family. In terms of assembly, homooligomer and heterooligomer. Core component of the 7SK RNP complex.

It is found in the nucleus. The protein resides in the cytoplasm. Its function is as follows. Transcriptional regulator which functions as a general RNA polymerase II transcription inhibitor. Core component of the 7SK RNP complex: in cooperation with 7SK snRNA sequesters P-TEFb in a large inactive 7SK snRNP complex preventing RNA polymerase II phosphorylation and subsequent transcriptional elongation. Plays a role in the regulation of DNA virus-mediated innate immune response by assembling into the HDP-RNP complex, a complex that serves as a platform for IRF3 phosphorylation and subsequent innate immune response activation through the cGAS-STING pathway. This Danio rerio (Zebrafish) protein is Protein HEXIM1 (hexim1).